The primary structure comprises 324 residues: 4-hydroxyphenylpyruvate 3-dimethylallyltransferase (324 aa).

Positions 160 and 281 each coordinate substrate.

Belongs to the aromatic prenyltransferase family. Monomer.

The catalysed reaction is 3-(4-hydroxyphenyl)pyruvate + dimethylallyl diphosphate = 3-dimethylallyl-4-hydroxyphenylpyruvate + diphosphate. It functions in the pathway antibiotic biosynthesis. In terms of biological role, magnesium-independent aromatic prenyltransferase that catalyzes the irreversible transfer of a dimethylallyl group to 4-hydroxyphenylpyruvate to produce the ring A structure in the clorobiocin biosynthesis pathway. Clorobiocin is an aminocoumarin family antibiotic. The sequence is that of 4-hydroxyphenylpyruvate 3-dimethylallyltransferase from Streptomyces roseochromogenus subsp. oscitans.